A 133-amino-acid polypeptide reads, in one-letter code: Holo-[acyl-carrier-protein] synthase (133 aa).

Residues D8 and E57 each contribute to the Mg(2+) site.

This sequence belongs to the P-Pant transferase superfamily. AcpS family. Mg(2+) serves as cofactor.

The protein localises to the cytoplasm. It catalyses the reaction apo-[ACP] + CoA = holo-[ACP] + adenosine 3',5'-bisphosphate + H(+). In terms of biological role, transfers the 4'-phosphopantetheine moiety from coenzyme A to a Ser of acyl-carrier-protein. This is Holo-[acyl-carrier-protein] synthase from Caulobacter sp. (strain K31).